Consider the following 656-residue polypeptide: Receptor-type tyrosine-protein phosphatase R (656 aa).

The signal sequence occupies residues 1 to 23 (MRRAVGFPALCLLLNLHAAGCFS). The O-linked (Xyl...) (chondroitin sulfate) serine glycan is linked to serine 23. The Extracellular portion of the chain corresponds to 25–225 (NNDHFLAIRQ…HEADKIWSKE (201 aa)). A glycan (N-linked (GlcNAc...) asparagine) is linked at asparagine 128. A helical transmembrane segment spans residues 226 to 248 (GFYAVVIFLSIFIIIVTCLMIIY). Residues 249-656 (RLKERLQLSF…ESRLSPETVQ (408 aa)) lie on the Cytoplasmic side of the membrane. Phosphoserine is present on serine 271. Serine 338 bears the Phosphoserine; by PKA mark. The region spanning 392–646 (LQSEFMEIPM…EFVHHALCLF (255 aa)) is the Tyrosine-protein phosphatase domain. Substrate-binding positions include aspartate 553, 587-593 (CSAGIGR), and glutamine 631. The active-site Phosphocysteine intermediate is cysteine 587.

It belongs to the protein-tyrosine phosphatase family. Receptor class 7 subfamily. Interacts with MAPKs. Widely expressed in the brain, most abundant in cerebellum, midbrain, cerebral cortex and hippocampus. Also expressed in heart and skeletal muscle.

It localises to the cytoplasm. The protein localises to the cell membrane. The enzyme catalyses O-phospho-L-tyrosyl-[protein] + H2O = L-tyrosyl-[protein] + phosphate. Functionally, sequesters mitogen-activated protein kinases (MAPKs) such as MAPK1, MAPK3 and MAPK14 in the cytoplasm in an inactive form. The MAPKs bind to a dephosphorylated kinase interacting motif, phosphorylation of which by the protein kinase A complex releases the MAPKs for activation and translocation into the nucleus. In Rattus norvegicus (Rat), this protein is Receptor-type tyrosine-protein phosphatase R (Ptprr).